The primary structure comprises 906 residues: Glutamate receptor 1 (906 aa).

The first 18 residues, 1-18 (MQHIFAFFCTGFLGAVVG), serve as a signal peptide directing secretion. The Extracellular segment spans residues 19-536 (ANFPNNIQIG…GVFSFLDPLA (518 aa)). 6 N-linked (GlcNAc...) asparagine glycosylation sites follow: asparagine 63, asparagine 249, asparagine 257, asparagine 363, asparagine 401, and asparagine 406. A disulfide bridge connects residues cysteine 75 and cysteine 323. Positions 492, 494, and 499 each coordinate L-glutamate. A helical membrane pass occupies residues 537–557 (YEIWMCIVFAYIGVSVVLFLV). At 558–584 (SRFSPYEWHSEEFEEGRDQTTSDQSNE) the chain is on the cytoplasmic side. The segment at residues 585–600 (FGIFNSLWFSLGAFMQ) is an intramembrane region (helical; Pore-forming). Residues 601-603 (QGC) lie within the membrane without spanning it. Residue cysteine 603 is the site of S-palmitoyl cysteine attachment. Over 604–609 (DISPRS) the chain is Cytoplasmic. Residues 610 to 630 (LSGRIVGGVWWFFTLIIISSY) form a helical membrane-spanning segment. The Extracellular segment spans residues 631–805 (TANLAAFLTV…DKTSALSLSN (175 aa)). Position 645 is a phosphoserine (serine 645). The L-glutamate site is built by serine 668 and threonine 669. Serine 710 carries the phosphoserine modification. Glutamate 719 contacts L-glutamate. The cysteines at positions 732 and 787 are disulfide-linked. Residues 806-826 (VAGVFYILIGGLGLAMLVALI) traverse the membrane as a helical segment. At 827-906 (EFCYKSRSES…SGMPLGATGL (80 aa)) the chain is on the cytoplasmic side. A lipid anchor (S-palmitoyl cysteine) is attached at cysteine 829. Serine 849 and serine 863 each carry phosphoserine. Residues 861-880 (RNSGAGASSAGSGENGRVVS) are disordered. Low complexity predominate over residues 863 to 872 (SGAGASSAGS). The PDZ-binding motif lies at 903-906 (ATGL).

It belongs to the glutamate-gated ion channel (TC 1.A.10.1) family. GRIA1 subfamily. Homotetramer or heterotetramer of pore-forming glutamate receptor subunits; heteromeric assembly can be the result of both receptor subtype and flip-flop forms and according the composition, one partner can be dominant with respect to the fast desensitizing current component, whereas the other can determine the steady-state component. Tetramers may be formed by the dimerization of dimers. Found in a complex with GRIA2, GRIA3, GRIA4, CNIH2, CNIH3, CACNG2, CACNG3, CACNG4, CACNG5, CACNG7 and CACNG8. Interacts with HIP1 and RASGRF2. Interacts with SYNDIG1 and GRIA2. Interacts with DLG1 (via C-terminus). Interacts with LRFN1. Interacts with PRKG2. Interacts with CNIH2 and CACNG2. Interacts with CACNG5; this interaction modulates the gating. Interacts (via C-terminus) with PDLIM4 (via LIM domain); this interaction as well as the interaction of PDLIM4 with alpha-actinin is required for their colocalization in early endosomes. Interacts with SNX27 (via PDZ domain); the interaction is required for recycling to the plasma membrane when endocytosed and prevent degradation in lysosomes. Interacts (via PDZ-binding motif) with SHANK3 (via PDZ domain). Interacts with CACNG3; associates GRIA1 with the adapter protein complex 4 (AP-4) to target GRIA1 to the somatodendritic compartment of neurons. Interacts with CACNG2; this interaction mediates traffick to the plasma membrane and modulation of desensitization. Interaction with CNIH2 and CNIH3; this interaction promotes expression at the plasma membrane and extensively modulates their gating properties by slowing deactivation and desensitization kinetics. Found in a complex with GRIA2, GRIA3, GRIA4, DLG4, CACNG8 and CNIH2. Phosphorylated at Ser-645. Phosphorylated at Ser-710 by PKC. Phosphorylated at Ser-849 by PKC, PKA and CAMK2. Phosphorylated at Ser-863 by PKC, PKA and PRKG2. Phosphorylation of Ser-863 is reduced by induction of long-term depression and increased by induction of long-term potentiation. Post-translationally, palmitoylated. Depalmitoylated by CPT1C and upon L-glutamate stimulation. ZDHHC3/GODZ specifically palmitoylates Cys-603, which leads to Golgi retention and decreased cell surface expression. In contrast, Cys-829 palmitoylation does not affect cell surface expression but regulates stimulation-dependent endocytosis.

The protein localises to the cell membrane. The protein resides in the endoplasmic reticulum membrane. It is found in the postsynaptic cell membrane. It localises to the postsynaptic density membrane. Its subcellular location is the cell projection. The protein localises to the dendrite. The protein resides in the dendritic spine. It is found in the early endosome membrane. It localises to the recycling endosome membrane. Its subcellular location is the presynapse. The protein localises to the synapse. The catalysed reaction is Ca(2+)(in) = Ca(2+)(out). It catalyses the reaction Na(+)(in) = Na(+)(out). The enzyme catalyses Mg(2+)(in) = Mg(2+)(out). It carries out the reaction Li(+)(in) = Li(+)(out). The catalysed reaction is K(+)(in) = K(+)(out). It catalyses the reaction Sr(2+)(in) = Sr(2+)(out). In terms of biological role, ionotropic glutamate receptor that functions as a ligand-gated cation channel, gated by L-glutamate and glutamatergic agonists such as alpha-amino-3-hydroxy-5-methyl-4-isoxazolepropionic acid (AMPA), quisqualic acid, and kainic acid. L-glutamate acts as an excitatory neurotransmitter at many synapses in the central nervous system. Binding of the excitatory neurotransmitter L-glutamate induces a conformation change, leading to the opening of the cation channel, and thereby converts the chemical signal to an electrical impulse upon entry of monovalent and divalent cations such as sodium and calcium. The receptor then desensitizes rapidly and enters in a transient inactive state, characterized by the presence of bound agonist. In the presence of CACNG2 or CACNG4 or CACNG7 or CACNG8, shows resensitization which is characterized by a delayed accumulation of current flux upon continued application of L-glutamate. Calcium (Ca(2+)) permeability depends on subunits composition and, heteromeric channels containing edited GRIA2 subunit are calcium-impermeable. Also permeable to other divalents cations such as strontium(2+) and magnesium(2+) and monovalent cations such as potassium(1+) and lithium(1+). The polypeptide is Glutamate receptor 1 (Macaca fascicularis (Crab-eating macaque)).